The sequence spans 174 residues: N-terminal acetyltransferase B complex catalytic subunit NAA20 (174 aa).

One can recognise an N-acetyltransferase domain in the interval 2–151 (TTIRRFSCND…DGLDMRKALS (150 aa)).

Belongs to the acetyltransferase family. ARD1 subfamily.

It carries out the reaction N-terminal L-methionyl-L-asparaginyl-[protein] + acetyl-CoA = N-terminal N(alpha)-acetyl-L-methionyl-L-asparaginyl-[protein] + CoA + H(+). It catalyses the reaction N-terminal L-methionyl-L-glutaminyl-[protein] + acetyl-CoA = N-terminal N(alpha)-acetyl-L-methionyl-L-glutaminyl-[protein] + CoA + H(+). The enzyme catalyses N-terminal L-methionyl-L-aspartyl-[protein] + acetyl-CoA = N-terminal N(alpha)-acetyl-L-methionyl-L-aspartyl-[protein] + CoA + H(+). The catalysed reaction is N-terminal L-methionyl-L-glutamyl-[protein] + acetyl-CoA = N-terminal N(alpha)-acetyl-L-methionyl-L-glutamyl-[protein] + CoA + H(+). In terms of biological role, catalytic subunit of the NatB N-alpha-acetyltransferase complex. Involved in plant immunity through the regulation of SNC1 stability. The sequence is that of N-terminal acetyltransferase B complex catalytic subunit NAA20 from Arabidopsis thaliana (Mouse-ear cress).